Here is a 249-residue protein sequence, read N- to C-terminus: Cysteine desulfuration protein SufE (249 aa).

C154 serves as the catalytic Cysteine persulfide intermediate.

It belongs to the SufE family. Monomer. Interacts with SufS; interaction enhances cysteine desulfurase activity of SufS. In terms of processing, proteolytically cleaved.

The protein resides in the plastid. Its subcellular location is the apicoplast. It participates in cofactor biosynthesis; iron-sulfur cluster biosynthesis. Functionally, participates in sulfur mobilization (SUF) pathway for iron-sulfur (Fe-S) cluster biogenesis. Enhances cysteine desulfurase activity of SufS. Probably functions as a sulfur acceptor for SufS. In Plasmodium falciparum (isolate 3D7), this protein is Cysteine desulfuration protein SufE.